A 233-amino-acid chain; its full sequence is 3-dehydroquinate dehydratase (233 aa).

3-dehydroquinate is bound by residues 39-41 (EIR) and Arg73. The Proton donor/acceptor role is filled by His132. The Schiff-base intermediate with substrate role is filled by Lys159. 3-dehydroquinate contacts are provided by Arg196 and Gln219.

It belongs to the type-I 3-dehydroquinase family. In terms of assembly, homodimer.

The enzyme catalyses 3-dehydroquinate = 3-dehydroshikimate + H2O. It functions in the pathway metabolic intermediate biosynthesis; chorismate biosynthesis; chorismate from D-erythrose 4-phosphate and phosphoenolpyruvate: step 3/7. Its function is as follows. Involved in the third step of the chorismate pathway, which leads to the biosynthesis of aromatic amino acids. Catalyzes the cis-dehydration of 3-dehydroquinate (DHQ) and introduces the first double bond of the aromatic ring to yield 3-dehydroshikimate. In Methanococcoides burtonii (strain DSM 6242 / NBRC 107633 / OCM 468 / ACE-M), this protein is 3-dehydroquinate dehydratase.